Consider the following 356-residue polypeptide: ATP-dependent 6-phosphofructokinase (356 aa).

ATP is bound by residues Gly-15, 78 to 79 (KG), and 115 to 118 (GEGT). Glu-116 contacts Mg(2+). Substrate is bound by residues 138–140 (TID), Arg-175, 182–184 (MGR), Glu-235, Arg-272, and 278–281 (HLQR). The active-site Proton acceptor is the Asp-140.

The protein belongs to the phosphofructokinase type A (PFKA) family. Mixed-substrate PFK group III subfamily. In terms of assembly, homodimer or homotetramer. Requires Mg(2+) as cofactor.

It localises to the cytoplasm. The enzyme catalyses beta-D-fructose 6-phosphate + ATP = beta-D-fructose 1,6-bisphosphate + ADP + H(+). It participates in carbohydrate degradation; glycolysis; D-glyceraldehyde 3-phosphate and glycerone phosphate from D-glucose: step 3/4. Catalyzes the phosphorylation of D-fructose 6-phosphate to fructose 1,6-bisphosphate by ATP, the first committing step of glycolysis. In Chloroflexus aggregans (strain MD-66 / DSM 9485), this protein is ATP-dependent 6-phosphofructokinase.